The primary structure comprises 842 residues: Protein P (842 aa).

Positions 1–177 are terminal protein domain (TP); the sequence is MPLSYQHFRR…FCGSPYSWEQ (177 aa). Positions 178–345 are spacer; sequence ELHHGAFLDG…YCLSHLVNLL (168 aa). The segment at 186–273 is disordered; sequence DGPSRMGEES…AKNIASRSAS (88 aa). A compositionally biased stretch (polar residues) spans 223-239; the sequence is GPQSQQRPLDRSQQGRS. Residues 346–689 are polymerase/reverse transcriptase domain (RT); that stretch reads EDWGPCTEHG…YLNLYPVARQ (344 aa). Residues 356–599 enclose the Reverse transcriptase domain; it reads RHHIRIPRTP…YSLNFMGYVI (244 aa). Residues Asp-428, Asp-550, and Asp-551 each coordinate Mg(2+).

The protein belongs to the hepadnaviridae P protein family.

The catalysed reaction is DNA(n) + a 2'-deoxyribonucleoside 5'-triphosphate = DNA(n+1) + diphosphate. The enzyme catalyses Endonucleolytic cleavage to 5'-phosphomonoester.. With respect to regulation, activated by host HSP70 and HSP40 in vitro to be able to bind the epsilon loop of the pgRNA. Because deletion of the RNase H region renders the protein partly chaperone-independent, the chaperones may be needed indirectly to relieve occlusion of the RNA-binding site by this domain. Inhibited by several reverse-transcriptase inhibitors: Lamivudine, Adefovir and Entecavir. Multifunctional enzyme that converts the viral RNA genome into dsDNA in viral cytoplasmic capsids. This enzyme displays a DNA polymerase activity that can copy either DNA or RNA templates, and a ribonuclease H (RNase H) activity that cleaves the RNA strand of RNA-DNA heteroduplexes in a partially processive 3'- to 5'-endonucleasic mode. Neo-synthesized pregenomic RNA (pgRNA) are encapsidated together with the P protein, and reverse-transcribed inside the nucleocapsid. Initiation of reverse-transcription occurs first by binding the epsilon loop on the pgRNA genome, and is initiated by protein priming, thereby the 5'-end of (-)DNA is covalently linked to P protein. Partial (+)DNA is synthesized from the (-)DNA template and generates the relaxed circular DNA (RC-DNA) genome. After budding and infection, the RC-DNA migrates in the nucleus, and is converted into a plasmid-like covalently closed circular DNA (cccDNA). The activity of P protein does not seem to be necessary for cccDNA generation, and is presumably released from (+)DNA by host nuclear DNA repair machinery. The protein is Protein P of Homo sapiens (Human).